A 381-amino-acid chain; its full sequence is Probable tRNA sulfurtransferase (381 aa).

Residues 55–163 (GECLENLNKV…DDEAFIYHEK (109 aa)) enclose the THUMP domain. ATP is bound by residues 181 to 182 (LV), Lys-265, Gly-287, and Gln-296.

Belongs to the ThiI family.

The protein localises to the cytoplasm. The catalysed reaction is [ThiI sulfur-carrier protein]-S-sulfanyl-L-cysteine + a uridine in tRNA + 2 reduced [2Fe-2S]-[ferredoxin] + ATP + H(+) = [ThiI sulfur-carrier protein]-L-cysteine + a 4-thiouridine in tRNA + 2 oxidized [2Fe-2S]-[ferredoxin] + AMP + diphosphate. It catalyses the reaction [ThiS sulfur-carrier protein]-C-terminal Gly-Gly-AMP + S-sulfanyl-L-cysteinyl-[cysteine desulfurase] + AH2 = [ThiS sulfur-carrier protein]-C-terminal-Gly-aminoethanethioate + L-cysteinyl-[cysteine desulfurase] + A + AMP + 2 H(+). It functions in the pathway cofactor biosynthesis; thiamine diphosphate biosynthesis. Its function is as follows. Catalyzes the ATP-dependent transfer of a sulfur to tRNA to produce 4-thiouridine in position 8 of tRNAs, which functions as a near-UV photosensor. Also catalyzes the transfer of sulfur to the sulfur carrier protein ThiS, forming ThiS-thiocarboxylate. This is a step in the synthesis of thiazole, in the thiamine biosynthesis pathway. The sulfur is donated as persulfide by IscS. The chain is Probable tRNA sulfurtransferase from Methanobrevibacter smithii (strain ATCC 35061 / DSM 861 / OCM 144 / PS).